We begin with the raw amino-acid sequence, 530 residues long: MQKQQLWERYKNLLYHDAELELSVDTSRIDFPEGFLEKMDPRLQQAYQEMEALEQGAVANPDEHRMVGHYWLRAPELAPEATLAEEITSTLAAIEAFASSVHGGNIAAPDGHRFTDLLIIGIGGSALGPQFLADSLGGPKDLLRIWFFDNTDPDGMDKVLSGIGAALKQTLVVVISKSGGTKETRNGMLEACQAFERAGLHFAGHAVAVTGSGSELDRTASRENWLGVFPMWDWVGGRTSVTSAVGLLPAALQGIDVDRLLAGARACDQKTRSRVTRENPAALLALSWFHATQGKGTRDMVLLPYKDRLLLFSRYLQQLIMESLGKGLDRDGKEVLQGIAVYGNKGSTDQHAYVQQLREGVHNFFVTFIEVLKDRQGPSMEVEPGATSGDYLSGFFQGTRSALYEKGRESVTITVRELSPASIGALIALYERAVGLYASLVNVNAYHQPGVEAGKEAAGAVLKLQGEIMELLRRQPNRDFTGEEMALALARPEEVETTFMILRHLAANGDHGVSVTEKDKIWENKYRSKD.

Glutamate 322 acts as the Proton donor in catalysis. Residues histidine 351 and lysine 455 contribute to the active site.

This sequence belongs to the GPI family.

It localises to the cytoplasm. It catalyses the reaction alpha-D-glucose 6-phosphate = beta-D-fructose 6-phosphate. It functions in the pathway carbohydrate biosynthesis; gluconeogenesis. It participates in carbohydrate degradation; glycolysis; D-glyceraldehyde 3-phosphate and glycerone phosphate from D-glucose: step 2/4. Its function is as follows. Catalyzes the reversible isomerization of glucose-6-phosphate to fructose-6-phosphate. The polypeptide is Glucose-6-phosphate isomerase (Citrifermentans bemidjiense (strain ATCC BAA-1014 / DSM 16622 / JCM 12645 / Bem) (Geobacter bemidjiensis)).